The primary structure comprises 269 residues: Hydroxyethylthiazole kinase (269 aa).

Met42 contributes to the substrate binding site. Residues Arg118 and Ser164 each contribute to the ATP site. Substrate is bound at residue Gly191.

Belongs to the Thz kinase family. Mg(2+) is required as a cofactor.

The enzyme catalyses 5-(2-hydroxyethyl)-4-methylthiazole + ATP = 4-methyl-5-(2-phosphooxyethyl)-thiazole + ADP + H(+). It participates in cofactor biosynthesis; thiamine diphosphate biosynthesis; 4-methyl-5-(2-phosphoethyl)-thiazole from 5-(2-hydroxyethyl)-4-methylthiazole: step 1/1. Catalyzes the phosphorylation of the hydroxyl group of 4-methyl-5-beta-hydroxyethylthiazole (THZ). This chain is Hydroxyethylthiazole kinase, found in Listeria monocytogenes serotype 4a (strain HCC23).